We begin with the raw amino-acid sequence, 559 residues long: NXPE family member 3 (559 aa).

The N-terminal stretch at 1–30 (MWTNFFKLRLFCCLLAVLMVVVLVINVTQV) is a signal peptide. Residues N237, N292, and N346 are each glycosylated (N-linked (GlcNAc...) asparagine).

The protein belongs to the NXPE family.

It is found in the secreted. In Homo sapiens (Human), this protein is NXPE family member 3 (NXPE3).